A 231-amino-acid chain; its full sequence is Enolase-phosphatase E1 (231 aa).

This sequence belongs to the HAD-like hydrolase superfamily. MasA/MtnC family. Monomer. Mg(2+) is required as a cofactor.

The catalysed reaction is 5-methylsulfanyl-2,3-dioxopentyl phosphate + H2O = 1,2-dihydroxy-5-(methylsulfanyl)pent-1-en-3-one + phosphate. It functions in the pathway amino-acid biosynthesis; L-methionine biosynthesis via salvage pathway; L-methionine from S-methyl-5-thio-alpha-D-ribose 1-phosphate: step 3/6. Its pathway is amino-acid biosynthesis; L-methionine biosynthesis via salvage pathway; L-methionine from S-methyl-5-thio-alpha-D-ribose 1-phosphate: step 4/6. In terms of biological role, bifunctional enzyme that catalyzes the enolization of 2,3-diketo-5-methylthiopentyl-1-phosphate (DK-MTP-1-P) into the intermediate 2-hydroxy-3-keto-5-methylthiopentenyl-1-phosphate (HK-MTPenyl-1-P), which is then dephosphorylated to form the acireductone 1,2-dihydroxy-3-keto-5-methylthiopentene (DHK-MTPene). The protein is Enolase-phosphatase E1 of Stenotrophomonas maltophilia (strain K279a).